The primary structure comprises 286 residues: S-adenosylmethionine-dependent methyltransferase UmaA (286 aa).

S-adenosyl-L-methionine-binding positions include 32-33, 67-75, 93-98, and 122-123; these read YT, LLDIGCGWG, TLSRNQ, and WD. The active site involves C268.

This sequence belongs to the CFA/CMAS family.

It localises to the cytoplasm. In terms of biological role, methyltransferase that modifies short-chain fatty acids. In vitro, catalyzes the transfer of the methyl group from S-adenosyl-L-methionine (SAM) to the double bond of phospholipid-linked oleic acid to produce tuberculostearic acid (10-methylstearic-acid or TSA). The sequence is that of S-adenosylmethionine-dependent methyltransferase UmaA from Mycobacterium tuberculosis (strain ATCC 25618 / H37Rv).